Here is a 473-residue protein sequence, read N- to C-terminus: Tyrosine phenol-lyase (473 aa).

Lys257 carries the post-translational modification N6-(pyridoxal phosphate)lysine.

It belongs to the beta-eliminating lyase family. In terms of assembly, homotetramer. Pyridoxal 5'-phosphate serves as cofactor.

It carries out the reaction L-tyrosine + H2O = phenol + pyruvate + NH4(+). In Intrasporangium calvum (strain ATCC 23552 / DSM 43043 / JCM 3097 / NBRC 12989 / NCIMB 10167 / NRRL B-3866 / 7 KIP), this protein is Tyrosine phenol-lyase.